The primary structure comprises 378 residues: Spermidine/putrescine import ATP-binding protein PotA (378 aa).

Positions 18 to 248 constitute an ABC transporter domain; the sequence is VQLAGIRKCF…PKNLFVAGFI (231 aa). Position 50–57 (50–57) interacts with ATP; the sequence is GPSGCGKT.

Belongs to the ABC transporter superfamily. Spermidine/putrescine importer (TC 3.A.1.11.1) family. In terms of assembly, the complex is composed of two ATP-binding proteins (PotA), two transmembrane proteins (PotB and PotC) and a solute-binding protein (PotD).

The protein resides in the cell inner membrane. It carries out the reaction ATP + H2O + polyamine-[polyamine-binding protein]Side 1 = ADP + phosphate + polyamineSide 2 + [polyamine-binding protein]Side 1.. In terms of biological role, part of the ABC transporter complex PotABCD involved in spermidine/putrescine import. Responsible for energy coupling to the transport system. The chain is Spermidine/putrescine import ATP-binding protein PotA from Shigella dysenteriae serotype 1 (strain Sd197).